The chain runs to 691 residues: TBC1 domain family member 15 (691 aa).

At Ala-2 the chain carries N-acetylalanine. Phosphoserine occurs at positions 23, 70, 205, 213, and 274. Residues 346–556 (GLSHALRKQA…RLWEVMWTEL (211 aa)) form the Rab-GAP TBC domain. Residues Ser-640 and Ser-675 each carry the phosphoserine modification. Thr-689 carries the post-translational modification Phosphothreonine.

As to quaternary structure, interacts with non-phosphorylated form of RAB8A; phosphorylation of RAB8A at 'Thr-72' disrupts this interaction. Interacts with ARMC12. In terms of tissue distribution, ubiquitous.

It is found in the cytoplasm. Its function is as follows. Acts as a GTPase activating protein for RAB7A. Does not act on RAB4, RAB5 or RAB6. This chain is TBC1 domain family member 15 (TBC1D15), found in Homo sapiens (Human).